A 625-amino-acid polypeptide reads, in one-letter code: Chaperone protein HtpG (625 aa).

Positions methionine 1–arginine 341 are a; substrate-binding. The segment at glutamate 342–lysine 551 is b. Residues valine 552–alanine 625 are c.

It belongs to the heat shock protein 90 family. Homodimer.

Its subcellular location is the cytoplasm. Its function is as follows. Molecular chaperone. Has ATPase activity. The polypeptide is Chaperone protein HtpG (Halalkalibacterium halodurans (strain ATCC BAA-125 / DSM 18197 / FERM 7344 / JCM 9153 / C-125) (Bacillus halodurans)).